The primary structure comprises 334 residues: Beta-hexosaminidase (334 aa).

Residues D60, R68, R133, and 163-164 (KH) contribute to the substrate site. The active-site Proton donor/acceptor is H176. The active-site Nucleophile is D247.

The protein belongs to the glycosyl hydrolase 3 family. NagZ subfamily.

The protein localises to the cytoplasm. It carries out the reaction Hydrolysis of terminal non-reducing N-acetyl-D-hexosamine residues in N-acetyl-beta-D-hexosaminides.. It participates in cell wall biogenesis; peptidoglycan recycling. Its function is as follows. Plays a role in peptidoglycan recycling by cleaving the terminal beta-1,4-linked N-acetylglucosamine (GlcNAc) from peptide-linked peptidoglycan fragments, giving rise to free GlcNAc, anhydro-N-acetylmuramic acid and anhydro-N-acetylmuramic acid-linked peptides. The polypeptide is Beta-hexosaminidase (Xanthomonas oryzae pv. oryzae (strain KACC10331 / KXO85)).